The sequence spans 417 residues: Imidazolonepropionase (417 aa).

2 residues coordinate Fe(3+): His80 and His82. 2 residues coordinate Zn(2+): His80 and His82. 3 residues coordinate 4-imidazolone-5-propanoate: Arg89, Tyr152, and His187. Tyr152 contributes to the N-formimidoyl-L-glutamate binding site. His252 is a binding site for Fe(3+). His252 contributes to the Zn(2+) binding site. Glu255 provides a ligand contact to 4-imidazolone-5-propanoate. Residue Asp326 participates in Fe(3+) binding. Zn(2+) is bound at residue Asp326. N-formimidoyl-L-glutamate-binding residues include Asn328 and Gly330. Ser331 is a 4-imidazolone-5-propanoate binding site.

The protein belongs to the metallo-dependent hydrolases superfamily. HutI family. It depends on Zn(2+) as a cofactor. The cofactor is Fe(3+).

The protein localises to the cytoplasm. The catalysed reaction is 4-imidazolone-5-propanoate + H2O = N-formimidoyl-L-glutamate. Its pathway is amino-acid degradation; L-histidine degradation into L-glutamate; N-formimidoyl-L-glutamate from L-histidine: step 3/3. In terms of biological role, catalyzes the hydrolytic cleavage of the carbon-nitrogen bond in imidazolone-5-propanoate to yield N-formimidoyl-L-glutamate. It is the third step in the universal histidine degradation pathway. The polypeptide is Imidazolonepropionase (Bacteroides fragilis (strain ATCC 25285 / DSM 2151 / CCUG 4856 / JCM 11019 / LMG 10263 / NCTC 9343 / Onslow / VPI 2553 / EN-2)).